The primary structure comprises 153 residues: Endoribonuclease YbeY (153 aa).

Residues His-114, His-118, and His-124 each contribute to the Zn(2+) site.

This sequence belongs to the endoribonuclease YbeY family. It depends on Zn(2+) as a cofactor.

It is found in the cytoplasm. In terms of biological role, single strand-specific metallo-endoribonuclease involved in late-stage 70S ribosome quality control and in maturation of the 3' terminus of the 16S rRNA. In Shewanella baltica (strain OS223), this protein is Endoribonuclease YbeY.